An 849-amino-acid polypeptide reads, in one-letter code: Rho guanine nucleotide exchange factor 15 (849 aa).

Disordered regions lie at residues 1–146, 159–202, and 277–308; these read MSAQ…ASAP, GAEG…NGTP, and LPPL…LPSE. Residues 18-31 are compositionally biased toward basic residues; that stretch reads RIIRPRPPSRHRAP. A compositionally biased stretch (polar residues) spans 48–59; sequence QISNDASASVCT. Residues 65-110 show a composition bias toward low complexity; it reads PPTASLKPPALLPPSVSRTSLDSQTSPDSPSSTPSPSPVSRRSISP. 2 positions are modified to phosphoserine: S107 and S109. Pro residues predominate over residues 111–123; it reads EPAPCSPVPPPKP. Residues 164–180 are compositionally biased toward polar residues; the sequence is AQSSDSLERCSQGSTEV. Y361 is subject to Phosphotyrosine; by EPHB2. The region spanning 425 to 609 is the DH domain; the sequence is RMQESLFEVV…SKIIERCSAE (185 aa). 2 stretches are compositionally biased toward polar residues: residues 771-786 and 840-849; these read CSEP…QSLE and SSGTPDTPQP. Disordered stretches follow at residues 771–803 and 819–849; these read CSEP…GWLK and GEHE…TPQP.

In terms of assembly, interacts with EPHA4. Interacts with EPHB2. Post-translationally, phosphorylated on tyrosine residues upon EFNA1 stimulation. EPHB2-dependent phosphorylation at Tyr-361 triggers UBE3A-mediated ubiquitination. Ubiquitinated; UBE3A-mediated ubiquitination and degradation by the proteasome promotes EFNB1-dependent synapse formation. In terms of tissue distribution, at P12, expressed is detected in the CA1 region and the dentate gyrus of the hippocampus.

It is found in the cell projection. Its subcellular location is the dendrite. Functionally, specific GEF for RhoA activation. Does not activate RAC1 or CDC42. Regulates vascular smooth muscle contractility. Negatively regulates excitatory synapse development by suppressing the synapse-promoting activity of EPHB2. This is Rho guanine nucleotide exchange factor 15 (Arhgef15) from Mus musculus (Mouse).